Here is a 477-residue protein sequence, read N- to C-terminus: Cysteine--tRNA ligase (477 aa).

Zn(2+) is bound at residue Cys-29. The 'HIGH' region motif lies at Pro-31–Asn-41. Residues Cys-224, His-249, and Glu-253 each coordinate Zn(2+). The 'KMSKS' region motif lies at Lys-282–Ser-286. Lys-285 serves as a coordination point for ATP.

The protein belongs to the class-I aminoacyl-tRNA synthetase family. As to quaternary structure, monomer. Requires Zn(2+) as cofactor.

It localises to the cytoplasm. It catalyses the reaction tRNA(Cys) + L-cysteine + ATP = L-cysteinyl-tRNA(Cys) + AMP + diphosphate. In Nitrobacter winogradskyi (strain ATCC 25391 / DSM 10237 / CIP 104748 / NCIMB 11846 / Nb-255), this protein is Cysteine--tRNA ligase.